The chain runs to 784 residues: E3 UFM1-protein ligase 1 homolog (784 aa).

Residues serine 405–alanine 480 form a disordered region. Residues lysine 444–alanine 454 show a composition bias toward basic residues.

This sequence belongs to the UFL1 family.

Its function is as follows. E3 UFM1-protein ligase that mediates ufmylation of target proteins. The protein is E3 UFM1-protein ligase 1 homolog of Drosophila yakuba (Fruit fly).